A 687-amino-acid polypeptide reads, in one-letter code: Putative metabolite transport protein YDL199C (687 aa).

Residues 1-22 (MKPPLNMSRSNKPLTQEANSSA) form a disordered region. The Extracellular segment spans residues 1 to 122 (MKPPLNMSRS…RHSSRVLRTS (122 aa)). The segment covering 7–22 (MSRSNKPLTQEANSSA) has biased composition (polar residues). S90 is subject to Phosphoserine. Residues 123–143 (FISFVVLVSSLSGLDQGLISG) traverse the membrane as a helical segment. Over 144–164 (NVMTLSFQKYFHYPLTSPLGN) the chain is Cytoplasmic. Residues 165–185 (IVSIVNLGAFMASLFVYSGIL) form a helical membrane-spanning segment. Residues 186–192 (EPCSRKK) lie on the Extracellular side of the membrane. The chain crosses the membrane as a helical span at residues 193-213 (MLQISTMIYSLGAIVQVLALN). The Cytoplasmic segment spans residues 214–216 (QWC). Residues 217-237 (LLLGRFLLGVGMGFAFSMVII) traverse the membrane as a helical segment. The Extracellular portion of the chain corresponds to 238–251 (YQFEFPLPCIRKRT). A helical transmembrane segment spans residues 252–272 (LISIQCVSSVIAYSFGIWINC). Topologically, residues 273–283 (AFRYLGFAWRY) are cytoplasmic. Residues 284-304 (PLSTHVALGIILNLMSFYLIL) form a helical membrane-spanning segment. Residues 305-410 (ESPSWLLKQK…MGRGERKSIY (106 aa)) lie on the Extracellular side of the membrane. Residues 411 to 431 (LTGLNALIYSIVILAYVPLVL) traverse the membrane as a helical segment. Residues 432–439 (RKRKEKTN) lie on the Cytoplasmic side of the membrane. Residues 440–460 (VLLGSIVMCALLFTISFTDWF) form a helical membrane-spanning segment. The Extracellular portion of the chain corresponds to 461 to 469 (PKSTTRYIS). The helical transmembrane segment at 470-490 (ILFAVFLFTHFISWDSIGWVM) threads the bilayer. The Cytoplasmic segment spans residues 491 to 500 (TIELLPHLSQ). The chain crosses the membrane as a helical span at residues 501-521 (APVILLVSNFYWIFKWFVSLI). The Extracellular segment spans residues 522 to 533 (TPILIDRLSWKF). Residues 534–554 (YLIPSLSSFISIIFVLKIFPI) form a helical membrane-spanning segment. Residues 555 to 687 (ETRDERLDSD…QNSPGDMAVA (133 aa)) are Cytoplasmic-facing. 2 disordered regions span residues 561-587 (LDSDDDSTGNGSGNHDDVFDDTGSEFS) and 654-687 (SFHNRTDPNISDNIAANKPSSGGGQNSPGDMAVA). The segment covering 660–673 (DPNISDNIAANKPS) has biased composition (polar residues).

Belongs to the major facilitator superfamily. Sugar transporter (TC 2.A.1.1) family.

The protein resides in the membrane. This chain is Putative metabolite transport protein YDL199C, found in Saccharomyces cerevisiae (strain ATCC 204508 / S288c) (Baker's yeast).